The chain runs to 302 residues: tRNA pseudouridine synthase B (302 aa).

Aspartate 45 functions as the Nucleophile in the catalytic mechanism.

It belongs to the pseudouridine synthase TruB family. Type 1 subfamily.

The catalysed reaction is uridine(55) in tRNA = pseudouridine(55) in tRNA. In terms of biological role, responsible for synthesis of pseudouridine from uracil-55 in the psi GC loop of transfer RNAs. The polypeptide is tRNA pseudouridine synthase B (Francisella tularensis subsp. holarctica (strain FTNF002-00 / FTA)).